Here is a 118-residue protein sequence, read N- to C-terminus: UPF0251 protein TTE1845 (118 aa).

The protein belongs to the UPF0251 family.

The protein is UPF0251 protein TTE1845 of Caldanaerobacter subterraneus subsp. tengcongensis (strain DSM 15242 / JCM 11007 / NBRC 100824 / MB4) (Thermoanaerobacter tengcongensis).